A 133-amino-acid chain; its full sequence is MAVPLLTKKVVKKRSAKFIRPQSDRRITVKESWRRPKGIDSRVRRKFKGVTLMPNVGYGSDKKTRHYLPNGFKKFVVHNTSELELLMMHNRTYCAEIAHNVSTKKRKAIVERASQLDVVVTNRLARLRSQEDE.

Belongs to the eukaryotic ribosomal protein eL32 family.

In Arabidopsis thaliana (Mouse-ear cress), this protein is Large ribosomal subunit protein eL32z (RPL32A).